The following is a 777-amino-acid chain: Intraflagellar transport protein 80 homolog (777 aa).

WD repeat units lie at residues 12-50 (KHQE…TSLI), 104-143 (AHCG…RSTL), 145-185 (QQGT…LQWK), 186-225 (AHDG…LYGS), 227-265 (PHEH…YALE), 267-306 (PNTG…WEWK), and 504-542 (KLGT…YVDR).

As to quaternary structure, component of the IFT complex B, at least composed of IFT20, IFT22, IFT25, IFT27, IFT46, IFT52, TRAF3IP1/IFT54, IFT57, IFT74, IFT80, IFT81, and IFT88. Interacts with IFT88. Interacts with IFT57 and IFT70B.

Its subcellular location is the cytoplasm. It is found in the cytoskeleton. The protein localises to the cilium basal body. It localises to the cilium axoneme. Component of the intraflagellar transport (IFT) complex B, which is essential for the development and maintenance of motile and sensory cilia. The polypeptide is Intraflagellar transport protein 80 homolog (Ift80) (Mus musculus (Mouse)).